The chain runs to 277 residues: tRNA pseudouridine synthase A (277 aa).

Residue Asp-57 is the Nucleophile of the active site. Tyr-115 contacts substrate.

It belongs to the tRNA pseudouridine synthase TruA family. As to quaternary structure, homodimer.

The enzyme catalyses uridine(38/39/40) in tRNA = pseudouridine(38/39/40) in tRNA. In terms of biological role, formation of pseudouridine at positions 38, 39 and 40 in the anticodon stem and loop of transfer RNAs. The polypeptide is tRNA pseudouridine synthase A (Nitratidesulfovibrio vulgaris (strain DSM 19637 / Miyazaki F) (Desulfovibrio vulgaris)).